The primary structure comprises 237 residues: Ankyrin repeat protein 14 (237 aa).

ANK repeat units follow at residues 27–56 and 60–90; these read RGET…DVNI and NGYT…TLDC.

Functionally, may be involved in virus-host protein interaction through the ankyrin repeats. This chain is Ankyrin repeat protein 14, found in Vaccinia virus (strain Western Reserve) (VACV).